The primary structure comprises 76 residues: UPF0248 protein MMP0286 (76 aa).

Belongs to the UPF0248 family.

This Methanococcus maripaludis (strain DSM 14266 / JCM 13030 / NBRC 101832 / S2 / LL) protein is UPF0248 protein MMP0286.